A 151-amino-acid chain; its full sequence is MYPAHLLVLLAVCVSLLGAASIPARPLNLYQFGNMIQCANHGRRPTRHYMDYGCYCGKGGSGTPVDELDRCCQTHDDCYGEAEKLPACNYMMSGPYYNTYSYECNDGELTCKDNNDECKAFICNCDRTAAICFARTPYNDANWNINTKTSC.

Residues 1 to 27 (MYPAHLLVLLAVCVSLLGAASIPARPL) form the signal peptide. 7 cysteine pairs are disulfide-bonded: cysteine 38–cysteine 104, cysteine 54–cysteine 151, cysteine 56–cysteine 72, cysteine 71–cysteine 132, cysteine 78–cysteine 125, cysteine 88–cysteine 118, and cysteine 111–cysteine 123. The Ca(2+) site is built by tyrosine 55, glycine 57, and glycine 59. The active site involves histidine 75. Ca(2+) is bound at residue aspartate 76. The active site involves aspartate 126.

The protein belongs to the phospholipase A2 family. Group I subfamily. D49 sub-subfamily. Ca(2+) serves as cofactor. As to expression, expressed by the venom gland.

It is found in the secreted. The catalysed reaction is a 1,2-diacyl-sn-glycero-3-phosphocholine + H2O = a 1-acyl-sn-glycero-3-phosphocholine + a fatty acid + H(+). PLA2 catalyzes the calcium-dependent hydrolysis of the 2-acyl groups in 3-sn-phosphoglycerides. In Tropidechis carinatus (Australian rough-scaled snake), this protein is Acidic phospholipase A2 4.